A 308-amino-acid polypeptide reads, in one-letter code: 1,4-dihydroxy-2-naphthoate octaprenyltransferase (308 aa).

Topologically, residues 1 to 20 are cytoplasmic; it reads MTEQQISRTQAWLESLRPKT. The chain crosses the membrane as a helical span at residues 21–41; that stretch reads LPLAFAAIIVGTALAWWQGHF. Aspartate 42 is a topological domain (periplasmic). Residues 43–63 traverse the membrane as a helical segment; the sequence is PLVALLALITAGLLQILSNLA. At 64–97 the chain is on the cytoplasmic side; the sequence is NDYGDAVKGSDKPDRIGPLRGMQKGVITQQEMKR. The helical transmembrane segment at 98-118 threads the bilayer; sequence ALIITVVLICLSGLALVAVAC. Residues 119–123 are Periplasmic-facing; the sequence is HTLAD. Residues 124 to 144 form a helical membrane-spanning segment; it reads FVGFLILGGLSIIAAITYTVG. At 145–148 the chain is on the cytoplasmic side; it reads NRPY. Residues 149–169 form a helical membrane-spanning segment; sequence GYIGLGDISVLVFFGWLSVMG. At 170–176 the chain is on the periplasmic side; the sequence is SWYLQAH. Residues 177 to 197 traverse the membrane as a helical segment; that stretch reads TLIPALILPATACGLLATAVL. The Cytoplasmic portion of the chain corresponds to 198–227; the sequence is NINNLRDINSDRENGKNTLVVRLGEVNARR. Residues 228-247 form a helical membrane-spanning segment; that stretch reads YHACLLMGSLVCLALFNLFS. Over 248 to 250 the chain is Periplasmic; it reads LHS. Residues 251 to 270 traverse the membrane as a helical segment; it reads LWGWLFLLAAPLLVKQARYV. Over 271–286 the chain is Cytoplasmic; that stretch reads MREMDPVAMRPMLERT. A helical membrane pass occupies residues 287 to 307; the sequence is VKGALLTNLLFVLGIFLSQWA. Residue alanine 308 is a topological domain, periplasmic.

Belongs to the MenA family. Type 1 subfamily.

Its subcellular location is the cell inner membrane. It catalyses the reaction an all-trans-polyprenyl diphosphate + 1,4-dihydroxy-2-naphthoate + H(+) = a 2-demethylmenaquinol + CO2 + diphosphate. The protein operates within quinol/quinone metabolism; menaquinone biosynthesis; menaquinol from 1,4-dihydroxy-2-naphthoate: step 1/2. Functionally, conversion of 1,4-dihydroxy-2-naphthoate (DHNA) to demethylmenaquinone (DMK). Attaches octaprenylpyrophosphate, a membrane-bound 40-carbon side chain to DHNA. The conversion of DHNA to DMK proceeds in three stages: the removal of the carboxyl group of DHNA as CO(2), the attachment of the isoprenoid side chain, and a quinol-to-quinone oxidation, which is thought to be spontaneous. The chain is 1,4-dihydroxy-2-naphthoate octaprenyltransferase from Escherichia coli (strain K12).